The sequence spans 304 residues: Murein tetrapeptide carboxypeptidase (304 aa).

The active-site Nucleophile is the serine 106. Residues glutamate 200 and histidine 270 each act as charge relay system in the active site.

Belongs to the peptidase S66 family.

Its subcellular location is the cytoplasm. The catalysed reaction is N-acetyl-D-glucosaminyl-N-acetylmuramoyl-L-alanyl-meso-2,6-diaminoheptanedioyl-D-alanine + H2O = N-acetyl-D-glucosaminyl-N-acetylmuramoyl-L-alanyl-meso-2,6-diaminoheptanedioate + D-alanine. It participates in cell wall biogenesis; peptidoglycan recycling. Functionally, releases the terminal D-alanine residue from the cytoplasmic tetrapeptide recycling product L-Ala-gamma-D-Glu-meso-Dap-D-Ala. Can also cleave D-Ala from murein derivatives containing the tetrapeptide, i.e. MurNAc-tetrapeptide, UDP-MurNAc-tetrapeptide, GlcNAc-MurNAc-tetrapeptide, and GlcNAc-anhMurNAc-tetrapeptide. Does not act on murein sacculi or cross-linked muropeptides. The tripeptides produced by the LcdA reaction can then be reused as peptidoglycan building blocks; LcdA is thereby involved in murein recycling. In Escherichia coli O6:H1 (strain CFT073 / ATCC 700928 / UPEC), this protein is Murein tetrapeptide carboxypeptidase (ldcA).